We begin with the raw amino-acid sequence, 132 residues long: Small ribosomal subunit protein uS12 (132 aa).

At aspartate 89 the chain carries 3-methylthioaspartic acid. The segment at glycine 106–lysine 132 is disordered. Residues aspartate 109–lysine 120 show a composition bias toward basic residues.

Belongs to the universal ribosomal protein uS12 family. In terms of assembly, part of the 30S ribosomal subunit. Contacts proteins S8 and S17. May interact with IF1 in the 30S initiation complex.

Functionally, with S4 and S5 plays an important role in translational accuracy. Interacts with and stabilizes bases of the 16S rRNA that are involved in tRNA selection in the A site and with the mRNA backbone. Located at the interface of the 30S and 50S subunits, it traverses the body of the 30S subunit contacting proteins on the other side and probably holding the rRNA structure together. The combined cluster of proteins S8, S12 and S17 appears to hold together the shoulder and platform of the 30S subunit. The sequence is that of Small ribosomal subunit protein uS12 (rpsL) from Thermus thermophilus (strain ATCC BAA-163 / DSM 7039 / HB27).